The chain runs to 201 residues: NADH-quinone oxidoreductase subunit C (201 aa).

Belongs to the complex I 30 kDa subunit family. As to quaternary structure, NDH-1 is composed of 14 different subunits. Subunits NuoB, C, D, E, F, and G constitute the peripheral sector of the complex.

The protein localises to the cell inner membrane. It catalyses the reaction a quinone + NADH + 5 H(+)(in) = a quinol + NAD(+) + 4 H(+)(out). Functionally, NDH-1 shuttles electrons from NADH, via FMN and iron-sulfur (Fe-S) centers, to quinones in the respiratory chain. The immediate electron acceptor for the enzyme in this species is believed to be ubiquinone. Couples the redox reaction to proton translocation (for every two electrons transferred, four hydrogen ions are translocated across the cytoplasmic membrane), and thus conserves the redox energy in a proton gradient. The sequence is that of NADH-quinone oxidoreductase subunit C from Mesorhizobium japonicum (strain LMG 29417 / CECT 9101 / MAFF 303099) (Mesorhizobium loti (strain MAFF 303099)).